Consider the following 325-residue polypeptide: Elongation factor P--(R)-beta-lysine ligase (325 aa).

76–78 (SPE) contributes to the substrate binding site. ATP contacts are provided by residues 100–102 (RNE) and N109. Y118 serves as a coordination point for substrate. 244-245 (EL) is an ATP binding site. E251 is a binding site for substrate. Residue G300 coordinates ATP.

It belongs to the class-II aminoacyl-tRNA synthetase family. EpmA subfamily. Homodimer.

The enzyme catalyses D-beta-lysine + L-lysyl-[protein] + ATP = N(6)-((3R)-3,6-diaminohexanoyl)-L-lysyl-[protein] + AMP + diphosphate + H(+). Its function is as follows. With EpmB is involved in the beta-lysylation step of the post-translational modification of translation elongation factor P (EF-P) on 'Lys-34'. Catalyzes the ATP-dependent activation of (R)-beta-lysine produced by EpmB, forming a lysyl-adenylate, from which the beta-lysyl moiety is then transferred to the epsilon-amino group of EF-P 'Lys-34'. This Salmonella dublin (strain CT_02021853) protein is Elongation factor P--(R)-beta-lysine ligase.